The following is a 461-amino-acid chain: Glycerol-3-phosphate acyltransferase, chloroplastic (461 aa).

A chloroplast-targeting transit peptide spans 1–96; the sequence is MSMTGSSAYY…SPPNMSASVS (96 aa). The span at 47–76 shows a compositional bias: low complexity; sequence LLSSTSSSSSSSISLRSSTAPSPSCSSVTP. Residues 47–88 are disordered; the sequence is LLSSTSSSSSSSISLRSSTAPSPSCSSVTPKDNCLASAKHSP. The short motif at 231–236 is the HXXXXD motif element; it reads HQTEAD.

It belongs to the GPAT/DAPAT family.

The protein localises to the plastid. It is found in the chloroplast stroma. It carries out the reaction sn-glycerol 3-phosphate + an acyl-CoA = a 1-acyl-sn-glycero-3-phosphate + CoA. It functions in the pathway phospholipid metabolism; CDP-diacylglycerol biosynthesis; CDP-diacylglycerol from sn-glycerol 3-phosphate: step 1/3. Its function is as follows. Esterifies acyl-group from acyl-ACP to the sn-1 position of glycerol-3-phosphate. The enzyme from chilling-resistant plants discriminates against non-fluid palmitic acid and selects oleic acid whereas the enzyme from sensitive plants accepts both fatty acids. The polypeptide is Glycerol-3-phosphate acyltransferase, chloroplastic (PLSB) (Phaseolus vulgaris (Kidney bean)).